The sequence spans 194 residues: Ribosomal RNA small subunit methyltransferase G (194 aa).

Residues glycine 70, tyrosine 75, 121-122 (VE), and arginine 135 each bind S-adenosyl-L-methionine.

This sequence belongs to the methyltransferase superfamily. RNA methyltransferase RsmG family.

It localises to the cytoplasm. The enzyme catalyses guanosine(527) in 16S rRNA + S-adenosyl-L-methionine = N(7)-methylguanosine(527) in 16S rRNA + S-adenosyl-L-homocysteine. Functionally, specifically methylates the N7 position of guanine in position 527 of 16S rRNA. The protein is Ribosomal RNA small subunit methyltransferase G of Aliarcobacter butzleri (strain RM4018) (Arcobacter butzleri).